A 430-amino-acid chain; its full sequence is Cholecystokinin receptor type A (430 aa).

Over 1-41 the chain is Extracellular; it reads MDVVDSLFVNGSNITSACELGFENETLFCLDRPRPSKEWQP. N-linked (GlcNAc...) asparagine glycosylation is found at Asn10, Asn13, and Asn24. Cys18 and Cys29 are oxidised to a cystine. A helical transmembrane segment spans residues 42–67; that stretch reads AVQILLYSLIFLLSVLGNTLVITVLI. The Cytoplasmic portion of the chain corresponds to 68–77; that stretch reads RNKRMRTVTN. Residues 78–104 form a helical membrane-spanning segment; it reads IFLLSLAVSDLMLCLFCMPFNLIPSLL. The Extracellular segment spans residues 105-115; sequence KDFIFGSAVCK. Cys114 and Cys196 are joined by a disulfide. The chain crosses the membrane as a helical span at residues 116–137; the sequence is TTTYFMGTSVSVSTFNLVAISL. Topologically, residues 138–157 are cytoplasmic; that stretch reads ERYGAICKPLQSRVWQTKSH. A helical transmembrane segment spans residues 158 to 178; sequence ALKVIAATWCLSFTIMTPYPI. Over 179 to 210 the chain is Extracellular; that stretch reads YSNLVPFTKNNNQTGNMCRFLLPNDVMQQTWH. N-linked (GlcNAc...) asparagine glycosylation occurs at Asn190. Residues 211 to 234 traverse the membrane as a helical segment; sequence TFLLLILFLIPGIVMMVAYGLISL. Topologically, residues 235–315 are cytoplasmic; it reads ELYQGIKFDA…NLMAKKRVIR (81 aa). The helical transmembrane segment at 316–336 threads the bilayer; that stretch reads MLIVIVVLFFLCWMPIFSANA. The Extracellular portion of the chain corresponds to 337–351; it reads WRAYDTVSAERHLSG. The helical transmembrane segment at 352-375 threads the bilayer; sequence TPISFILLLSYTSSCVNPIIYCFM. The Cytoplasmic portion of the chain corresponds to 376 to 430; it reads NKRFRLGFMATFPCCPNPGTPGVRGEMGEEEEGRTTGASLSRYSYSHMSTSAPPP. Cys389 carries S-palmitoyl cysteine lipidation. The segment at 396 to 430 is disordered; that stretch reads PGVRGEMGEEEEGRTTGASLSRYSYSHMSTSAPPP. A compositionally biased stretch (polar residues) spans 413 to 430; the sequence is ASLSRYSYSHMSTSAPPP.

Belongs to the G-protein coupled receptor 1 family.

Its subcellular location is the cell membrane. Functionally, receptor for cholecystokinin. Mediates pancreatic growth and enzyme secretion, smooth muscle contraction of the gall bladder and stomach. Has a 1000-fold higher affinity for CCK rather than for gastrin. It modulates feeding and dopamine-induced behavior in the central and peripheral nervous system. This receptor mediates its action by association with G proteins that activate a phosphatidylinositol-calcium second messenger system. This is Cholecystokinin receptor type A (CCKAR) from Cavia porcellus (Guinea pig).